Here is a 492-residue protein sequence, read N- to C-terminus: MEPQLAEFVLKEEMTCQCPKMSDGAYDMDVDQNYFEEEVRLASFANFPSSYPVSAPALARAGFYYTGDGDRVKCFSCLAMVEGWQHGDTAIGKHRKISPNCKFINGFNNLRSDCILTQVPVMQNGFQNSAEDLAERSSSEIMADYLLRTGRVVDMSTPKYPRHMEMCSEEARLQTFQNWPAYSPLTPKELANAGLFYTGINDQVKCFCCGGKLMNWEPSDKAWTEHKKHFPECYFVLGRDVGNVATEANTHGGRRRGSELACPAMNDYNARLETFSSWSFPIDKETLAKAGFYSIGDGDATKCFHCGGVLNCWSATDDPWEEHAKAYPGCKFLIDEKGQHFINHAQLKRPILHKANSADASPALPKDSNLLKSPLVTDAQQMGFPLEEIKKVMGQKLKTTGKNYTCVEEFVSDLCAQKETVLEKPKEIEISLEEKLRQLEEEKICKVCMDRRISIVFIPCGHLVACAVCADVLDKCPICCTIVERRQKIFMS.

BIR repeat units lie at residues 40-105, 172-237, and 271-334; these read RLAS…KFIN, RLQT…YFVL, and RLET…KFLI. The Zn(2+) site is built by Cys303, Cys306, His323, and Cys330. Residues 445–480 form an RING-type zinc finger; the sequence is CKVCMDRRISIVFIPCGHLVACAVCADVLDKCPICC.

Belongs to the IAP family. As to quaternary structure, monomer, and homodimer. In terms of processing, degraded in a 2-step mechanism; a caspase-independent first step and a caspase-dependent second step. Stabilized indirectly by MAPK, which acts to delay caspase activation, rather than directly phosphorylating xiap.

It localises to the cytoplasm. It catalyses the reaction S-ubiquitinyl-[E2 ubiquitin-conjugating enzyme]-L-cysteine + [acceptor protein]-L-lysine = [E2 ubiquitin-conjugating enzyme]-L-cysteine + N(6)-ubiquitinyl-[acceptor protein]-L-lysine.. Multi-functional protein which regulates not only caspases and apoptosis, but also acts as an E3 ubiquitin-protein ligase mediating ubiquitination and subsequent proteasomal degradation of its target proteins. Acts as a direct caspase inhibitor. E3 ubiquitin-protein ligase that acts as an important regulator of innate immunity by mediating 'Lys-63'-linked polyubiquitination of ripk2 downstream of NOD1 and NOD2, thereby transforming ripk2 into a scaffolding protein for downstream effectors, ultimately leading to activation of the NF-kappa-B and MAP kinases signaling. A key apoptotic suppressor in eggs. Acts as a positive regulator of Wnt signaling. The protein is E3 ubiquitin-protein ligase XIAP (xiap) of Xenopus tropicalis (Western clawed frog).